The following is a 199-amino-acid chain: Recombination protein RecR (199 aa).

A C4-type zinc finger spans residues 56–71 (CAICGNVAEHEQCRIC). The Toprim domain maps to 79–174 (TVLCVVEEPK…RVTRLASGLP (96 aa)).

This sequence belongs to the RecR family.

Its function is as follows. May play a role in DNA repair. It seems to be involved in an RecBC-independent recombinational process of DNA repair. It may act with RecF and RecO. This is Recombination protein RecR from Acidothermus cellulolyticus (strain ATCC 43068 / DSM 8971 / 11B).